Here is a 363-residue protein sequence, read N- to C-terminus: NADH-quinone oxidoreductase subunit H (363 aa).

A run of 10 helical transmembrane segments spans residues 29-49, 62-82, 96-116, 127-147, 163-183, 202-222, 239-257, 264-286, 299-319, and 339-359; these read VLKI…YVVW, GPMY…KLLF, FIIA…VVPF, VGLL…ILAG, AAQV…VMIA, FFDW…VSGV, IVAG…LFFL, ILVS…QGWV, TGGW…YIWF, and FIPL…YGVI.

Belongs to the complex I subunit 1 family. NDH-1 is composed of 14 different subunits. Subunits NuoA, H, J, K, L, M, N constitute the membrane sector of the complex.

It localises to the cell inner membrane. The enzyme catalyses a quinone + NADH + 5 H(+)(in) = a quinol + NAD(+) + 4 H(+)(out). NDH-1 shuttles electrons from NADH, via FMN and iron-sulfur (Fe-S) centers, to quinones in the respiratory chain. The immediate electron acceptor for the enzyme in this species is believed to be ubiquinone. Couples the redox reaction to proton translocation (for every two electrons transferred, four hydrogen ions are translocated across the cytoplasmic membrane), and thus conserves the redox energy in a proton gradient. This subunit may bind ubiquinone. This Xanthomonas campestris pv. campestris (strain B100) protein is NADH-quinone oxidoreductase subunit H.